We begin with the raw amino-acid sequence, 519 residues long: Cell adhesion molecule CEACAM1 (519 aa).

A signal peptide spans 1–34 (MELASARLLRGQIPWRGLLLTASLLTYWSPLTTA). Pyrrolidone carboxylic acid is present on glutamine 35. At 35 to 425 (QVTVDAVPPN…QGNSGLSEGA (391 aa)) the chain is on the extracellular side. The required for homophilic binding stretch occupies residues 39–142 (DAVPPNVVEE…QTSVQFRVYP (104 aa)). In terms of domain architecture, Ig-like V-type spans 42 to 140 (PPNVVEEKSV…PIQTSVQFRV (99 aa)). N-linked (GlcNAc...) asparagine glycans are attached at residues asparagine 87, asparagine 104, asparagine 113, asparagine 148, asparagine 152, asparagine 173, asparagine 197, asparagine 224, asparagine 256, asparagine 288, asparagine 292, asparagine 302, asparagine 315, and asparagine 331. Ig-like C2-type domains lie at 147 to 232 (PNVT…FNLD), 237 to 317 (PDAP…KNIT), and 325 to 403 (PSIQ…FRIS). A disulfide bond links cysteine 167 and cysteine 215. An intrachain disulfide couples cysteine 259 to cysteine 299. A disulfide bond links cysteine 344 and cysteine 392. Residue asparagine 374 is glycosylated (N-linked (GlcNAc...) asparagine; atypical). The helical transmembrane segment at 426–446 (IAGIVIGSVAGVALIAALAYF) threads the bilayer. Residues 445 to 457 (YFLYSRKTGGGSD) form an interaction with calmodulin region. The Cytoplasmic segment spans residues 447–519 (LYSRKTGGGS…ETVYSVVKKK (73 aa)). The interval 447 to 519 (LYSRKTGGGS…ETVYSVVKKK (73 aa)) is interaction with FLNA. The tract at residues 455 to 519 (GSDHRDLTEH…ETVYSVVKKK (65 aa)) is disordered. Positions 456 to 466 (SDHRDLTEHKP) are enriched in basic and acidic residues. The required for interaction with PTPN11 and PTPN6 and for control of phosphorylation level stretch occupies residues 484–519 (DDVSYSVLNFNAQQSKRPTSASSSPTETVYSVVKKK). Tyrosine 488 carries the phosphotyrosine; by SRC, LCK, INSR and EGFR modification. Over residues 489–512 (SVLNFNAQQSKRPTSASSSPTETV) the composition is skewed to polar residues. A Phosphoserine modification is found at serine 503. Position 513 is a phosphotyrosine; by INSR, SRC and LCK (tyrosine 513). Positions 513–516 (YSVV) are essential for interaction with PTPN11 and PTPN6.

Belongs to the immunoglobulin superfamily. CEA family. As to quaternary structure, monomer. Oligomer. Heterodimer. Homodimer. Cis-dimer/oligomer (via Ig-like C2-type and/or via cytoplasmic domains); induced by trans-homophilic cell adhesion through an allosteric mechanism transmitted by the Ig-like V-type domain, and is regulated by intracellular calcium and calmodulin. Interacts (via cytoplasmic domain) with calmodulin in a calcium dependent manner; reduces homophilic cell adhesion through dissociation of dimer. Isoform 1 interacts (via cytoplasmic domain) with PTPN11 (preferentially) and PTPN6; cis-homodimer form is preferred; this interaction is decreased by formation of isoform 1 / isoform 2 cis-heterodimers and is dependent on the monomer/dimer equilibrium; this interaction is phosphorylation-dependent. Isoform 1 interacts with LYN. Isoform 1 interacts (via cytoplasmic domain) with SRC (via SH2 domain); this interaction is regulated by trans-homophilic cell adhesion. Isoform 1 interacts (via cytoplasmic domain) with LCK; mediates phosphorylation at Tyr-488 and Tyr-513 resulting in PTPN6 association. Isoform 1 interacts with PTPN6; this interaction is phosphorylation-dependent and causes a profound decrease in TCR stimulation-induced CD247 and ZAP70 phosphorylation. Isoform 1 interacts with TCR/CD3 complex through TCR beta chain and CD3E; colocalizes at the cell surface and upon stimulation of the TCR/CD3 complex recruits PTPN6 in the TCR/CD3 complex, resulting in dephosphorylation of CD247 and ZAP70. Isoform 1 interacts (via cytoplasmic domain) with SHC1 (via SH2 domain); SHC1 mediates interaction with INSR or EGFR in a Ser-503 phosphorylation-dependent manner. Isoform 1 interacts with EGFR; the interaction is indirect. Isoform 1 interacts with CSF3R; down-regulates the CSF3R-STAT3 pathway through recruitment of PTPN6 that dephosphorylates CSF3R. Isoform 1 (phosphorylated form) interacts with TLR4 and SYK; recruits PTPN6 that dephosphorylates SYK, reducing the production of reactive oxygen species (ROS) and lysosome disruption, leading to a reduction of the inflammasome activity. Isoform 1 interacts with FLNA; inhibits cell migration and cell scattering by interfering with the interaction of FLNA with RALA. Isoform 1 interacts (via cytoplasmic domain) with PXN; the interaction is phosphotyrosyl-dependent. Isoform 1 interacts with KLRK1; recruits PTPN6 that dephosphorylates VAV1. Isoform 1 interacts with CEACAM8. Isoform 1 interacts with FASN; this interaction is insulin and phosphorylation-dependent; reduces fatty-acid synthase activity. Interacts (via Ig-like V-type) with HAVCR2 (via Ig-like V-type); facilitates the maturation and cell surface expression of HAVCR2 thereby regulating T-cell tolerance induction. Isoform 2 interacts (via the cytoplasmic domain) with ANXA2; this interaction is regulated by phosphorylation and appears in the AIIt complex. Interacts (via Lewis X moieties) with CD209 (via C-type lectin domain); this interaction is regulated by the glycosylation pattern of CEACAM1 on cell types and regulates contact between dendritic cells and neutrophils. In terms of processing, phosphorylated on serine and tyrosine. Isoform 1 is phosphorylated on tyrosine by Src family kinases like SRC and LCK and by receptor like CSF3R, EGFR and INSR upon stimulation. Phosphorylated at Ser-503; mediates activity. Phosphorylated at Tyr-488; regulates activity. Phosphorylated at Tyr-488 by EGFR and INSR upon stimulation; this phosphorylation is Ser-503-phosphorylation-dependent; mediates cellular internalization; increases interaction with FASN. Phosphorylated at Tyr-488 and Tyr-513 by LCK; mediates PTPN6 association and is regulated by homophilic ligation of CEACAM1 in the absence of T-cell activation. Phosphorylated at Tyr-513; mediates interaction with PTPN11. Post-translationally, phosphorylated on serine and threonine. In terms of tissue distribution, expressed in epithelia, vessel endothelia, leukocytes and platelets. Isoform 1 and isoform 2 are highly expressed in liver and intestine, moderately in lung, and weakly in muscle, kidney, and spleen. Expressed in granulocytes, lymphocytes, granulocytes, B cells, and T-cells.

The protein resides in the cell membrane. It is found in the lateral cell membrane. The protein localises to the apical cell membrane. It localises to the basal cell membrane. Its subcellular location is the cell junction. The protein resides in the adherens junction. It is found in the cytoplasmic vesicle. The protein localises to the secretory vesicle. It localises to the cell projection. Its subcellular location is the microvillus membrane. Functionally, cell adhesion protein that mediates homophilic cell adhesion in a calcium-independent manner. Plays a role as coinhibitory receptor in immune response, insulin action and also functions as an activator during angiogenesis. Its coinhibitory receptor function is phosphorylation- and PTPN6 -dependent, which in turn, suppress signal transduction of associated receptors by dephosphorylation of their downstream effectors. Plays a role in immune response, of T-cells, natural killer (NK) and neutrophils. Upon TCR/CD3 complex stimulation, inhibits TCR-mediated cytotoxicity by blocking granule exocytosis by mediating homophilic binding to adjacent cells, allowing interaction with and phosphorylation by LCK and interaction with the TCR/CD3 complex which recruits PTPN6 resulting in dephosphorylation of CD247 and ZAP70. Also inhibits T-cell proliferation and cytokine production through inhibition of JNK cascade and plays a crucial role in regulating autoimmunity and anti-tumor immunity by inhibiting T-cell through its interaction with HAVCR2. Upon natural killer (NK) cells activation, inhibit KLRK1-mediated cytolysis of CEACAM1-bearing tumor cells by trans-homophilic interactions with CEACAM1 on the target cell and lead to cis-interaction between CEACAM1 and KLRK1, allowing PTPN6 recruitment and then VAV1 dephosphorylation. Upon neutrophils activation negatively regulates IL1B production by recruiting PTPN6 to a SYK-TLR4-CEACAM1 complex, that dephosphorylates SYK, reducing the production of reactive oxygen species (ROS) and lysosome disruption, which in turn, reduces the activity of the inflammasome. Down-regulates neutrophil production by acting as a coinhibitory receptor for CSF3R by downregulating the CSF3R-STAT3 pathway through recruitment of PTPN6 that dephosphorylates CSF3R. Also regulates insulin action by promoting INS clearance and regulating lipogenesis in liver through regulating insulin signaling. Upon INS stimulation, undergoes phosphorylation by INSR leading to INS clearance by increasing receptor-mediated insulin endocytosis. This inernalization promotes interaction with FASN leading to receptor-mediated insulin degradation and to reduction of FASN activity leading to negative regulation of fatty acid synthesis. INSR-mediated phosphorylation also provokes a down-regulation of cell proliferation through SHC1 interaction resulting in decrease coupling of SHC1 to the MAPK3/ERK1-MAPK1/ERK2 and phosphatidylinositol 3-kinase pathways. Functions as activator in angiogenesis by promoting blood vessel remodeling through endothelial cell differentiation and migration and in arteriogenesis by increasing the number of collateral arteries and collateral vessel calibers after ischemia. Also regulates vascular permeability through the VEGFR2 signaling pathway resulting in control of nitric oxide production. Down-regulates cell growth in response to EGF through its interaction with SHC1 that mediates interaction with EGFR resulting in decrease coupling of SHC1 to the MAPK3/ERK1-MAPK1/ERK2 pathway. Negatively regulates platelet aggregation by decreasing platelet adhesion on type I collagen through the GPVI-FcRgamma complex. Inhibits cell migration and cell scattering through interaction with FLNA; interferes with the interaction of FLNA with RALA. Mediates bile acid transport activity in a phosphorylation dependent manner. Negatively regulates osteoclastogenesis. Cell adhesion proteins that mediates homophilic cell adhesion in a calcium-independent manner. Promotes populations of T-cells regulating IgA production and secretion associated with control of the commensal microbiota and resistance to enteropathogens. This is Cell adhesion molecule CEACAM1 from Rattus norvegicus (Rat).